A 207-amino-acid chain; its full sequence is Small ribosomal subunit protein uS4 (207 aa).

A disordered region spans residues 31-56; it reads KCKLDSKPGQHGRTSGARTSDYGNQL. The span at 42–53 shows a compositional bias: polar residues; that stretch reads GRTSGARTSDYG. One can recognise an S4 RNA-binding domain in the interval 97 to 157; the sequence is TRLDNVVYRM…EKSKKQVRIV (61 aa).

It belongs to the universal ribosomal protein uS4 family. Part of the 30S ribosomal subunit. Contacts protein S5. The interaction surface between S4 and S5 is involved in control of translational fidelity.

Its function is as follows. One of the primary rRNA binding proteins, it binds directly to 16S rRNA where it nucleates assembly of the body of the 30S subunit. With S5 and S12 plays an important role in translational accuracy. The protein is Small ribosomal subunit protein uS4 of Herminiimonas arsenicoxydans.